Consider the following 456-residue polypeptide: Exodeoxyribonuclease 7 large subunit (456 aa).

It belongs to the XseA family. In terms of assembly, heterooligomer composed of large and small subunits.

The protein resides in the cytoplasm. It catalyses the reaction Exonucleolytic cleavage in either 5'- to 3'- or 3'- to 5'-direction to yield nucleoside 5'-phosphates.. Its function is as follows. Bidirectionally degrades single-stranded DNA into large acid-insoluble oligonucleotides, which are then degraded further into small acid-soluble oligonucleotides. The polypeptide is Exodeoxyribonuclease 7 large subunit (Lactobacillus johnsonii (strain CNCM I-12250 / La1 / NCC 533)).